We begin with the raw amino-acid sequence, 208 residues long: MEPVKMTNSSDDFTQSAEPFKLFAEWLADAAKSEPNDPNAVALATVDPDGLPNVRMVLLKDFDETGFVFYTNYESKKGQEILSAEKAAMCFHWKSLRRQVRVRGPVEKVSDAEANAYYASRPRGSRIGAWASKQSRPLESRFALEKAVAEYTAKYAIGDIPRPPYWSGFRIRPVSIEFWHDRPFRLHDRVLFTRPTPEGDWNKDRLYP.

Residues 55–60, 70–71, lysine 76, lysine 77, and glutamine 99 contribute to the FMN site; these read RMVLLK and YT. Residue lysine 60 coordinates substrate. Tyrosine 117, arginine 121, and serine 125 together coordinate substrate. FMN is bound by residues 134 to 135 and tryptophan 179; that span reads QS. Position 185–187 (185–187) interacts with substrate; the sequence is RLH. Arginine 189 lines the FMN pocket.

It belongs to the pyridoxamine 5'-phosphate oxidase family. Homodimer. It depends on FMN as a cofactor.

The enzyme catalyses pyridoxamine 5'-phosphate + O2 + H2O = pyridoxal 5'-phosphate + H2O2 + NH4(+). It carries out the reaction pyridoxine 5'-phosphate + O2 = pyridoxal 5'-phosphate + H2O2. It functions in the pathway cofactor metabolism; pyridoxal 5'-phosphate salvage; pyridoxal 5'-phosphate from pyridoxamine 5'-phosphate: step 1/1. The protein operates within cofactor metabolism; pyridoxal 5'-phosphate salvage; pyridoxal 5'-phosphate from pyridoxine 5'-phosphate: step 1/1. In terms of biological role, catalyzes the oxidation of either pyridoxine 5'-phosphate (PNP) or pyridoxamine 5'-phosphate (PMP) into pyridoxal 5'-phosphate (PLP). This Brucella ovis (strain ATCC 25840 / 63/290 / NCTC 10512) protein is Pyridoxine/pyridoxamine 5'-phosphate oxidase.